The chain runs to 75 residues: MKLLLFTALVLVVISLIEVEAENERACIPLEKECTKTPGNCCSGLKCDCYRRFEQGVAKGIQCWCIGKDVTYKGV.

Residues 1–21 (MKLLLFTALVLVVISLIEVEA) form the signal peptide. Residues 22–25 (ENER) constitute a propeptide that is removed on maturation.

This sequence belongs to the neurotoxin 19 (CSTX) family. 06 (U6-Lctx) subfamily. In terms of processing, contains 4 disulfide bonds. As to expression, expressed by the venom gland.

The protein resides in the secreted. The chain is U6-lycotoxin-Ls1h from Lycosa singoriensis (Wolf spider).